The primary structure comprises 1286 residues: DNA-directed RNA polymerase 147 kDa polypeptide (1286 aa).

This sequence belongs to the poxviridae DNA-directed RNA polymerase 147 kDa subunit family. The DNA-dependent RNA polymerase used for intermediate and late genes expression consists of eight subunits Rpo30/OPG66, Rpo7/OPG90, Rpo22/OPG103, Rpo147/OPG105, Rpo18/OPG119, Rpo19/OPG131, Rpo132/OPG151 and Rpo35/OPG156. The same holoenzyme, with the addition of the transcription-specificity factor OPG109, is used for early gene expression.

The protein localises to the virion. The enzyme catalyses RNA(n) + a ribonucleoside 5'-triphosphate = RNA(n+1) + diphosphate. Its function is as follows. Part of the DNA-dependent RNA polymerase which catalyzes the transcription of viral DNA into RNA using the four ribonucleoside triphosphates as substrates. Responsible for the transcription of early, intermediate and late genes. DNA-dependent RNA polymerase associates with the early transcription factor (ETF), itself composed of OPG118 and OPG133, thereby allowing the early genes transcription. Late transcription, and probably also intermediate transcription, require newly synthesized RNA polymerase. The chain is DNA-directed RNA polymerase 147 kDa polypeptide (OPG105) from Vaccinia virus (strain Ankara) (VACV).